Here is a 363-residue protein sequence, read N- to C-terminus: Pyrimidine monooxygenase RutA (363 aa).

Residues 49-50 (IK), Asn115, Glu124, 140-141 (RY), and Ser190 contribute to the FMN site.

Belongs to the NtaA/SnaA/DszA monooxygenase family. RutA subfamily.

It catalyses the reaction uracil + FMNH2 + NADH + O2 = (Z)-3-ureidoacrylate + FMN + NAD(+) + H2O + H(+). The catalysed reaction is thymine + FMNH2 + NADH + O2 = (Z)-2-methylureidoacrylate + FMN + NAD(+) + H2O + H(+). In terms of biological role, catalyzes the pyrimidine ring opening between N-3 and C-4 by an unusual flavin hydroperoxide-catalyzed mechanism, adding oxygen atoms in the process to yield ureidoacrylate peracid, that immediately reacts with FMN forming ureidoacrylate and FMN-N(5)-oxide. The FMN-N(5)-oxide reacts spontaneously with NADH to produce FMN. Requires the flavin reductase RutF to regenerate FMN in vivo. This Klebsiella pneumoniae subsp. pneumoniae (strain ATCC 700721 / MGH 78578) protein is Pyrimidine monooxygenase RutA.